We begin with the raw amino-acid sequence, 617 residues long: MPKYRSFKTTHGKNMSGARSLWRATGMNDEDFKKPIIAIVNSFSQFVPGHIHLKKVGELISDQIQKSGGVPKEFNTIAIDDGIAMGHSGMLYSLPSRELIADSIEYVINAHCVDAMICVSNCDKITPGMLMAALRLNIPSVFISGGPMEAGKIRKNEKEIKIDLVDAIMIGGQSNQCKNFIKEVELLACPTCGSCSGMFTANSMNCLTEAIGLSLPGNGTLLATHVDRKNLFIKSAKTIVKITKEYYHHNNKKVLPRSIASKESFENAMILDIAMGGSTNTILHLLAAAQEAEIDFNMSNIDELSRKIPHICKVSPSTSLYHMEDVHRAGGVMGILGELNRANLLNKQTQNILQLNLEETLKEYDIVLSKNPDILKMFKAKPAGIRTIQPYSQENRWLTLDYDRKTGCIRSCKNAYSQDGGLAVLYGNLAKNGCIIKTAGIKKSNYIFSGPARVYESQEEAVNAILKGEIISGDIVVIRYEGPKGGPGMQEMLYPTTYLKSMKLDKTCALITDGRFSGGTSGLSIGHVSPEAANKGVIALVKNGDIINIDITQRVINLNITEQELQQRIFQEESKKSLSYKPLNRKRHISYALKTYAFFAMSADKGAVRDRQKLSKI.

Aspartate 81 lines the Mg(2+) pocket. Residue cysteine 122 participates in [2Fe-2S] cluster binding. Residues aspartate 123 and lysine 124 each coordinate Mg(2+). N6-carboxylysine is present on lysine 124. Cysteine 195 lines the [2Fe-2S] cluster pocket. Glutamate 491 contributes to the Mg(2+) binding site. The active-site Proton acceptor is serine 517.

This sequence belongs to the IlvD/Edd family. As to quaternary structure, homodimer. [2Fe-2S] cluster serves as cofactor. Requires Mg(2+) as cofactor.

It catalyses the reaction (2R)-2,3-dihydroxy-3-methylbutanoate = 3-methyl-2-oxobutanoate + H2O. The enzyme catalyses (2R,3R)-2,3-dihydroxy-3-methylpentanoate = (S)-3-methyl-2-oxopentanoate + H2O. It functions in the pathway amino-acid biosynthesis; L-isoleucine biosynthesis; L-isoleucine from 2-oxobutanoate: step 3/4. It participates in amino-acid biosynthesis; L-valine biosynthesis; L-valine from pyruvate: step 3/4. Functions in the biosynthesis of branched-chain amino acids. Catalyzes the dehydration of (2R,3R)-2,3-dihydroxy-3-methylpentanoate (2,3-dihydroxy-3-methylvalerate) into 2-oxo-3-methylpentanoate (2-oxo-3-methylvalerate) and of (2R)-2,3-dihydroxy-3-methylbutanoate (2,3-dihydroxyisovalerate) into 2-oxo-3-methylbutanoate (2-oxoisovalerate), the penultimate precursor to L-isoleucine and L-valine, respectively. The polypeptide is Dihydroxy-acid dehydratase (Buchnera aphidicola subsp. Diuraphis noxia).